We begin with the raw amino-acid sequence, 444 residues long: Cholecystokinin receptor type A (444 aa).

Topologically, residues 1–56 (MSHSPARQHLVESSRMDVVDSLLMNGSNITPPCELGLENETLFCLDQPQPSKEWQS) are extracellular. 2 N-linked (GlcNAc...) asparagine glycosylation sites follow: Asn-25 and Asn-39. The cysteines at positions 33 and 44 are disulfide-linked. A helical membrane pass occupies residues 57–82 (ALQILLYSIIFLLSVLGNTLVITVLI). Residues 83-92 (RNKRMRTVTN) are Cytoplasmic-facing. A helical membrane pass occupies residues 93-119 (IFLLSLAVSDLMLCLFCMPFNLIPNLL). Topologically, residues 120–130 (KDFIFGSAVCK) are extracellular. The cysteines at positions 129 and 211 are disulfide-linked. The chain crosses the membrane as a helical span at residues 131–152 (TTTYFMGTSVSVSTFNLVAISL). The Cytoplasmic segment spans residues 153 to 172 (ERYGAICRPLQSRVWQTKSH). The helical transmembrane segment at 173–193 (ALKVIAATWCLSFTIMTPYPI) threads the bilayer. The Extracellular segment spans residues 194 to 225 (YSNLVPFTKNNNQTANMCRFLLPSDAMQQSWQ). Asn-205 is a glycosylation site (N-linked (GlcNAc...) asparagine). The chain crosses the membrane as a helical span at residues 226 to 249 (TFLLLILFLLPGIVMVVAYGLISL). Over 250 to 329 (ELYQGIKFDA…NLIAKKRVIR (80 aa)) the chain is Cytoplasmic. Residues 263–288 (KSAKEKKPSTGSSTRYEDSDGCYLQK) are disordered. A helical transmembrane segment spans residues 330 to 350 (MLIVIVVLFFLCWMPIFSANA). At 351–365 (WRAYDTVSAEKHLSG) the chain is on the extracellular side. Residues 366–389 (TPISFILLLSYTSSCVNPIIYCFM) traverse the membrane as a helical segment. Residues 390–444 (NKRFRLGFMATFPCCPNPGPPGVRGEVGEEEDGRTIRALLSRYSYSHMSTSAPPP) lie on the Cytoplasmic side of the membrane. A lipid anchor (S-palmitoyl cysteine) is attached at Cys-403.

It belongs to the G-protein coupled receptor 1 family. Pancreas and brain. Also expressed in the gastrointestinal system and vagus nerve.

The protein resides in the cell membrane. Receptor for cholecystokinin. Mediates pancreatic growth and enzyme secretion, smooth muscle contraction of the gall bladder and stomach. Has a 1000-fold higher affinity for CCK rather than for gastrin. It modulates feeding and dopamine-induced behavior in the central and peripheral nervous system. This receptor mediates its action by association with G proteins that activate a phosphatidylinositol-calcium second messenger system. In Rattus norvegicus (Rat), this protein is Cholecystokinin receptor type A (Cckar).